An 87-amino-acid chain; its full sequence is Potassium channel toxin TsTXK-beta/Cryptide TyPep-16 (87 aa).

The signal sequence occupies residues 1–19 (MERKLALLLILGMVTLASC). The 35-residue stretch at 53 to 87 (QFGCPAYEGYCNDHCNDIERKDGECHGFKCKCAKD) folds into the BetaSPN-type CS-alpha/beta domain. Disulfide bonds link cysteine 56/cysteine 77, cysteine 63/cysteine 82, and cysteine 67/cysteine 84.

It belongs to the long chain scorpion toxin family. Class 1 subfamily. As to expression, expressed by the venom gland.

It is found in the secreted. In terms of biological role, specifically blocks voltage-gated potassium channels Kv4.2/KCND2. When measured at the peak current, the blocking effect of this toxin is about 65% and shows an IC(50)=652 nM. However, when measured at a later moment of the depolarising test pulse (500 ms), a 100% block of the current is observed with an IC(50)=313 nM. This may indicate a preference of the toxin for binding the inactivated state of the channel. The inhibition is completely reversible. In vivo, intraplantar injection into rat paw induces overt nociception (licking and lifting behaviors) and decreases the mechanical nociceptive threshold (hyperalgesia). Furthermore, the hyperalgesia is prolonged when intrathecal injections are performed. Induces discomfort and anxiety in mice, as it moderately diminishes locomotion (but has no effect on rearing behavior). Does not cause hemolysis, mast cell degranulation, LDH release, and does not have antimicrobial activity. Does not cause edema and pain. Functionally, does not induce hemolytic activity, lactate dehydrogenase (LDH) release from mast cells, mast cell degranulation, and antimicrobial effects. In vivo, injection into mice causes moderate edema formation, but induces very weak or no change in nociceptive sensibility. It also reduces mice locomotion, suggesting an increase in anxiety, but causes no alteration in rearing (standing on hind limbs). The protein is Potassium channel toxin TsTXK-beta/Cryptide TyPep-16 of Tityus serrulatus (Brazilian scorpion).